A 908-amino-acid polypeptide reads, in one-letter code: DNA mismatch repair protein MutS (908 aa).

662 to 669 (GPNMGGKS) is a binding site for ATP.

This sequence belongs to the DNA mismatch repair MutS family.

This protein is involved in the repair of mismatches in DNA. It is possible that it carries out the mismatch recognition step. This protein has a weak ATPase activity. The protein is DNA mismatch repair protein MutS of Rhizobium johnstonii (strain DSM 114642 / LMG 32736 / 3841) (Rhizobium leguminosarum bv. viciae).